The sequence spans 596 residues: Aspartate--tRNA(Asp/Asn) ligase (596 aa).

Residue Glu-169 participates in L-aspartate binding. The aspartate stretch occupies residues 193–196; the sequence is QLFK. Arg-215 lines the L-aspartate pocket. Residues 215–217 and Gln-224 contribute to the ATP site; that span reads RDE. His-447 serves as a coordination point for L-aspartate. Glu-481 contacts ATP. Arg-488 is an L-aspartate binding site. Residue 533–536 participates in ATP binding; sequence GWDR. The disordered stretch occupies residues 559–596; sequence GYDPLTQAPAPITAQQRKEAGVDFKPEAKKADPGATKA. A compositionally biased stretch (basic and acidic residues) spans 574–590; that stretch reads QRKEAGVDFKPEAKKAD.

This sequence belongs to the class-II aminoacyl-tRNA synthetase family. Type 1 subfamily. As to quaternary structure, homodimer.

It is found in the cytoplasm. The enzyme catalyses tRNA(Asx) + L-aspartate + ATP = L-aspartyl-tRNA(Asx) + AMP + diphosphate. Aspartyl-tRNA synthetase with relaxed tRNA specificity since it is able to aspartylate not only its cognate tRNA(Asp) but also tRNA(Asn). Reaction proceeds in two steps: L-aspartate is first activated by ATP to form Asp-AMP and then transferred to the acceptor end of tRNA(Asp/Asn). The polypeptide is Aspartate--tRNA(Asp/Asn) ligase (Arthrobacter sp. (strain FB24)).